The chain runs to 320 residues: MRSAQVYRWQIPMDAGVVLRDRRLKTRDGLYVCLRDGEREGWGEISPLPGFSQETWEEAQTALLTWVNDWLQGNEGLPEMPSVAFGASCALAELTGILPEAADYRAAPLCTGDPDDLVLRLADMPGEKIAKVKVGLYEAVRDGMVVNLLLEAIPDLHLRLDANRAWTPLKAQQFAKYVNPDYRARIAFLEEPCKTRDDSRAFARETGIAIAWDESLREADFTFEAEEGVRAVVIKPTLTGSLDKVREQVAAAHALGLTAVISSSIESSLGLTQLARIAAWLTPGTLPGLDTLHLMQAQQIRPWPGSALPCLKREELERLL.

The active-site Proton donor is lysine 133. Positions 161, 190, and 213 each coordinate Mg(2+). Lysine 235 acts as the Proton acceptor in catalysis.

The protein belongs to the mandelate racemase/muconate lactonizing enzyme family. MenC type 1 subfamily. The cofactor is a divalent metal cation.

It catalyses the reaction (1R,6R)-6-hydroxy-2-succinyl-cyclohexa-2,4-diene-1-carboxylate = 2-succinylbenzoate + H2O. The protein operates within quinol/quinone metabolism; 1,4-dihydroxy-2-naphthoate biosynthesis; 1,4-dihydroxy-2-naphthoate from chorismate: step 4/7. It functions in the pathway quinol/quinone metabolism; menaquinone biosynthesis. Converts 2-succinyl-6-hydroxy-2,4-cyclohexadiene-1-carboxylate (SHCHC) to 2-succinylbenzoate (OSB). The polypeptide is o-succinylbenzoate synthase (Salmonella newport (strain SL254)).